Consider the following 563-residue polypeptide: MIDIPPYPPLDPSNYDLIVVGTGVSESVLAAAASSSGSSVLHLDPNPFYGSHFASLSLPDLTSFLHSNSVSPPPSPSSPPLPPSNNHDFISVDLVNRSLYSSVEISSFESEILEEHSRRFNVDLAGPRVVFCADESINLMLKSGANNYVEFKSIDASFVGDSSGELRNVPDSRAAIFKDKSLTLLEKNQLMKFFKLVQSHLASSTEKDDSTTVKISEEDMESPFVDFLSKMRLPPKIKSIILYAIAMLDYDQDNTETCRHLLKTKEGIDRLALYITSMGRFSNALGALIYPIYGQGELPQAFCRRAAVKGCIYVLRMPITALLLDKETGGYKGVRLASGQEIFSQKLILDPCVTVGLESLSSLTDQQNETLSVLVPKSMINKEKIARGVCVIRGSVKANVSNALVVYPPKSLFPEQLTAIRVLQLGSGLAVCPADMHVLYLSTLCDNDDQGIKALLSAMSNLISLPVPENRQSDSVVENDTSETKPILLWRALYVQELVKGEFGGTISSMPSPDGNLNYNEIVESAVKLYEKLMGSEELFKEETSPAENTTEEENDGGVEIED.

The tract at residues 538–563 (ELFKEETSPAENTTEEENDGGVEIED) is disordered. The span at 550–563 (TTEEENDGGVEIED) shows a compositional bias: acidic residues.

It belongs to the Rab GDI family. As to quaternary structure, heterotrimer composed of the alpha subunit RGTA, the beta subunit RGTB and REP; within this trimer, RGTA and RGTB form the catalytic component, while REP mediates peptide substrate binding. In terms of tissue distribution, expressed in roots, leaves and flowers.

Its subcellular location is the cytoplasm. In terms of biological role, substrate-binding subunit of the Rab geranylgeranyltransferase (GGTase) complex. Binds unprenylated Rab proteins and presents the substrate peptide to the catalytic component composed of the alpha subunit RGTA and the beta subunit RGTB. Preferentially binds the GDP-bound form of Rab and stimulates geranylgeranylation of various Rab GTPases in vitro. The protein is Rab escort protein 1 of Arabidopsis thaliana (Mouse-ear cress).